Here is a 177-residue protein sequence, read N- to C-terminus: Large ribosomal subunit protein uL30 (177 aa).

Belongs to the universal ribosomal protein uL30 family. Part of the 50S ribosomal subunit.

The sequence is that of Large ribosomal subunit protein uL30 from Pyrobaculum islandicum (strain DSM 4184 / JCM 9189 / GEO3).